Consider the following 196-residue polypeptide: Lipoprotein signal peptidase (196 aa).

3 helical membrane-spanning segments follow: residues 43-63, 75-95, and 100-120; these read LMLKVTAFLNMVYTWNYGISF, AVFILTNSIIVCYLYYLMVCS, and GFAGYSFVIGGAVGNLIDRLF. Residues aspartate 126 and aspartate 144 contribute to the active site. The helical transmembrane segment at 135-155 threads the bilayer; sequence YSFPVFNLADCFITIGVIILI.

This sequence belongs to the peptidase A8 family.

It is found in the cell inner membrane. The catalysed reaction is Release of signal peptides from bacterial membrane prolipoproteins. Hydrolyzes -Xaa-Yaa-Zaa-|-(S,diacylglyceryl)Cys-, in which Xaa is hydrophobic (preferably Leu), and Yaa (Ala or Ser) and Zaa (Gly or Ala) have small, neutral side chains.. Its pathway is protein modification; lipoprotein biosynthesis (signal peptide cleavage). Functionally, this protein specifically catalyzes the removal of signal peptides from prolipoproteins. The polypeptide is Lipoprotein signal peptidase (Rickettsia canadensis (strain McKiel)).